The following is a 572-amino-acid chain: Urease subunit alpha (572 aa).

Residues 133-572 form the Urease domain; sequence GGIDLHVHYI…TSLSQRYFLF (440 aa). Residues His-138, His-140, and Lys-221 each contribute to the Ni(2+) site. The residue at position 221 (Lys-221) is an N6-carboxylysine. His-223 is a binding site for substrate. Positions 250 and 276 each coordinate Ni(2+). The active-site Proton donor is the His-324. Residue Asp-364 coordinates Ni(2+).

It belongs to the metallo-dependent hydrolases superfamily. Urease alpha subunit family. Heterotrimer of UreA (gamma), UreB (beta) and UreC (alpha) subunits. Three heterotrimers associate to form the active enzyme. The cofactor is Ni cation. In terms of processing, carboxylation allows a single lysine to coordinate two nickel ions.

It is found in the cytoplasm. It carries out the reaction urea + 2 H2O + H(+) = hydrogencarbonate + 2 NH4(+). Its pathway is nitrogen metabolism; urea degradation; CO(2) and NH(3) from urea (urease route): step 1/1. Functionally, ureolysis may allow urea to be employed as a nitrogen source for growth and produces ammonia which may protect from killing at low pH. This is Urease subunit alpha from Streptococcus salivarius (strain 57.I).